Consider the following 618-residue polypeptide: UvrABC system protein C (618 aa).

A GIY-YIG domain is found at 20 to 98 (TAPGVYRMYA…IKSLSPRYNV (79 aa)). In terms of domain architecture, UVR spans 207-242 (DQLGEEIMHSMQQASEALEFERAARLRDLLSSLRSM).

This sequence belongs to the UvrC family. Interacts with UvrB in an incision complex.

Its subcellular location is the cytoplasm. The UvrABC repair system catalyzes the recognition and processing of DNA lesions. UvrC both incises the 5' and 3' sides of the lesion. The N-terminal half is responsible for the 3' incision and the C-terminal half is responsible for the 5' incision. The polypeptide is UvrABC system protein C (Xanthomonas campestris pv. campestris (strain 8004)).